The chain runs to 163 residues: Photosystem II extrinsic protein V (163 aa).

A signal peptide spans Met1–Ala26. Heme c is bound by residues Cys63, Cys66, His67, and His118.

Belongs to the cytochrome c family. PsbV subfamily. In terms of assembly, PSII is composed of 1 copy each of membrane proteins PsbA, PsbB, PsbC, PsbD, PsbE, PsbF, PsbH, PsbI, PsbJ, PsbK, PsbL, PsbM, PsbT, PsbX, PsbY, PsbZ, Psb30/Ycf12, peripheral proteins PsbO, CyanoQ (PsbQ), PsbU, PsbV and a large number of cofactors. It forms dimeric complexes. Requires heme c as cofactor.

It localises to the cellular thylakoid membrane. In terms of biological role, one of the extrinsic, lumenal subunits of photosystem II (PSII). PSII is a light-driven water plastoquinone oxidoreductase, using light energy to abstract electrons from H(2)O, generating a proton gradient subsequently used for ATP formation. The extrinsic proteins stabilize the structure of photosystem II oxygen-evolving complex (OEC), the ion environment of oxygen evolution and protect the OEC against heat-induced inactivation. Low-potential cytochrome c that plays a role in the OEC of PSII. The sequence is that of Photosystem II extrinsic protein V from Trichormus variabilis (strain ATCC 29413 / PCC 7937) (Anabaena variabilis).